Consider the following 499-residue polypeptide: Neuronal acetylcholine receptor subunit alpha-3 (499 aa).

The first 25 residues, 1-25 (MGVVLPPPPLSMLMLVLMLLPVASA), serve as a signal peptide directing secretion. Residues 26 to 244 (SEAEHRLFQY…PLFYTINLII (219 aa)) lie on the Extracellular side of the membrane. N-linked (GlcNAc...) asparagine glycosylation is found at asparagine 49 and asparagine 166. 2 disulfides stabilise this stretch: cysteine 153–cysteine 167 and cysteine 217–cysteine 218. The helical transmembrane segment at 245–260 (PCLLISFLTVLVFYLP) threads the bilayer. Residues 261-262 (SD) are Cytoplasmic-facing. The helical transmembrane segment at 263–279 (CGEKVTLCISVLLSLTV) threads the bilayer. Glutamate 265 is a binding site for Na(+). Residues 280-301 (FLLVITETIPSTSLVIPLIGEY) lie on the Extracellular side of the membrane. The helical transmembrane segment at 302 to 320 (LLFTMIFVTLSIVITVFVL) threads the bilayer. Over 321–468 (NVHYRTPTTH…QDDWKYVAMV (148 aa)) the chain is Cytoplasmic. Serine 407 and serine 410 each carry phosphoserine. Residues 469–487 (IDRIFLWVFILVCILGTAG) form a helical membrane-spanning segment. Residues 488 to 499 (LFLQPLMARDDT) are Extracellular-facing.

This sequence belongs to the ligand-gated ion channel (TC 1.A.9) family. Acetylcholine receptor (TC 1.A.9.1) subfamily. Alpha-3/CHRNA3 sub-subfamily. Neuronal AChR is composed of two different types of subunits: alpha and beta. CHRNA3/Alpha-3 subunit can be combined to CHRNB2/beta-2 or CHRNB4/beta-4 to give rise to functional receptors. Part of a complex composed of STUB1/CHIP, VCP/p97, CHRNA3, and UBXN2A that modulates the ubiquitination and endoplasmic reticulum-associated degradation (ERAD) of CHRNA3. Within the complex UBXN2A acts as a scaffold protein required for the interaction of CHRNA3 with VCP/p97, this interaction also inhibits CHRNA3 ubiquitination by STUB1/CHIP and subsequently ERAD. Interacts with UBXN2A (via SEP domain), the interaction is required for the interaction of CHRNA3 in the STUB1:VCP:UBXN2A complex. Interacts with RIC3; which is required for proper folding and assembly. Interacts with LYPD6. Ubiquitinated; by STUB1/CHIP and thereafter degraded by the 26S proteosome complex. In terms of tissue distribution, expressed in the brain (at protein level).

The protein localises to the synaptic cell membrane. The protein resides in the cell membrane. Its subcellular location is the endoplasmic reticulum. It localises to the golgi apparatus. The enzyme catalyses K(+)(in) = K(+)(out). It catalyses the reaction Na(+)(in) = Na(+)(out). It carries out the reaction Ca(2+)(in) = Ca(2+)(out). With respect to regulation, activated by a myriad of ligands such as acetylcholine, cytisine, nicotine, choline and epibatidine. The heteropentamer CHRNA3:CHRNB2 activity is blocked by alpha-conotoxins ImI, ImII, PnIA, GID and MII. The heteropentamer CHRNA3:CHRNB4 activity is blocked by the alpha-conotoxin ImI. Its function is as follows. Component of neuronal acetylcholine receptors (nAChRs) that function as pentameric, ligand-gated cation channels with high calcium permeability among other activities. nAChRs are excitatory neurotrasnmitter receptors formed by a collection of nAChR subunits known to mediate synaptic transmission in the nervous system and the neuromuscular junction. Each nAchR subunit confers differential attributes to channel properties, including activation, deactivation and desensitization kinetics, pH sensitivity, cation permeability, and binding to allosteric modulators. CHRNA3 forms heteropentameric neuronal acetylcholine receptors with CHRNA5, CHRNB2 and CHRNB4. CHRNA3:CHRNB4 being predominant in neurons of the autonomic ganglia, it is known as ganglionic nicotinic receptor. CHRNA3:CHRNB4 or CHRNA3:CHRNA5:CHRNB4 play also an important role in the habenulo-interpeduncular tract, modulating the mesolimbic dopamine system and affecting reward circuits and addiction. Hypothalamic CHRNA3:CHRNB4 nAChR activation by nicotine leads to activation of POMC neurons and a decrease in food intake. Also expressed in the urothelium where it modulates reflex bladder activity by increasing intracellular calcium through extracellular influx and basal ATP release. This is Neuronal acetylcholine receptor subunit alpha-3 (Chrna3) from Mus musculus (Mouse).